The chain runs to 173 residues: Competence protein C (173 aa).

In terms of biological role, involved in transformation (genetic competence for DNA uptake). This is Competence protein C (comC) from Haemophilus influenzae (strain ATCC 51907 / DSM 11121 / KW20 / Rd).